A 447-amino-acid polypeptide reads, in one-letter code: Phosphoglucosamine mutase (447 aa).

The active-site Phosphoserine intermediate is Ser-88. Mg(2+) contacts are provided by Ser-88, Asp-231, Asp-233, and Asp-235. Ser-88 carries the phosphoserine modification.

Belongs to the phosphohexose mutase family. Mg(2+) serves as cofactor. Post-translationally, activated by phosphorylation.

The enzyme catalyses alpha-D-glucosamine 1-phosphate = D-glucosamine 6-phosphate. In terms of biological role, catalyzes the conversion of glucosamine-6-phosphate to glucosamine-1-phosphate. This is Phosphoglucosamine mutase from Methanococcus maripaludis (strain C7 / ATCC BAA-1331).